The chain runs to 109 residues: T cell receptor alpha variable 25 (109 aa).

Residues 1–19 form the signal peptide; that stretch reads MLLITSMLVLWMQLSQVNG. The region spanning 20–109 is the Ig-like domain; the sequence is QQVMQIPQYQ…TDVGTYFCAG (90 aa). Cysteine 41 and cysteine 107 form a disulfide bridge. N-linked (GlcNAc...) asparagine glycans are attached at residues asparagine 42 and asparagine 89.

Alpha-beta TR is a heterodimer composed of an alpha and beta chain; disulfide-linked. The alpha-beta TR is associated with the transmembrane signaling CD3 coreceptor proteins to form the TR-CD3 (TcR or TCR). The assembly of alpha-beta TR heterodimers with CD3 occurs in the endoplasmic reticulum where a single alpha-beta TR heterodimer associates with one CD3D-CD3E heterodimer, one CD3G-CD3E heterodimer and one CD247 homodimer forming a stable octameric structure. CD3D-CD3E and CD3G-CD3E heterodimers preferentially associate with TR alpha and TR beta chains, respectively. The association of the CD247 homodimer is the last step of TcR assembly in the endoplasmic reticulum and is required for transport to the cell surface.

The protein localises to the cell membrane. Functionally, v region of the variable domain of T cell receptor (TR) alpha chain that participates in the antigen recognition. Alpha-beta T cell receptors are antigen specific receptors which are essential to the immune response and are present on the cell surface of T lymphocytes. Recognize peptide-major histocompatibility (MH) (pMH) complexes that are displayed by antigen presenting cells (APC), a prerequisite for efficient T cell adaptive immunity against pathogens. Binding of alpha-beta TR to pMH complex initiates TR-CD3 clustering on the cell surface and intracellular activation of LCK that phosphorylates the ITAM motifs of CD3G, CD3D, CD3E and CD247 enabling the recruitment of ZAP70. In turn ZAP70 phosphorylates LAT, which recruits numerous signaling molecules to form the LAT signalosome. The LAT signalosome propagates signal branching to three major signaling pathways, the calcium, the mitogen-activated protein kinase (MAPK) kinase and the nuclear factor NF-kappa-B (NF-kB) pathways, leading to the mobilization of transcription factors that are critical for gene expression and essential for T cell growth and differentiation. The T cell repertoire is generated in the thymus, by V-(D)-J rearrangement. This repertoire is then shaped by intrathymic selection events to generate a peripheral T cell pool of self-MH restricted, non-autoaggressive T cells. Post-thymic interaction of alpha-beta TR with the pMH complexes shapes TR structural and functional avidity. This Homo sapiens (Human) protein is T cell receptor alpha variable 25.